The chain runs to 214 residues: Histone H1.1 (214 aa).

The tract at residues 1-43 (MSETAPVPQPASVAPEKPAATKKTRKPAKAAVPRKKPAGPSVS) is disordered. S2 carries the post-translational modification N-acetylserine. Phosphoserine is present on residues S2 and S12. K17 is modified (N6-acetyllysine). Residues 20 to 37 (ATKKTRKPAKAAVPRKKP) are compositionally biased toward basic residues. K36 bears the N6-(beta-hydroxybutyryl)lysine mark. Residues 38–111 (AGPSVSELIV…GAAGSFKLNK (74 aa)) form the H15 domain. S43 bears the Phosphoserine mark. N6-(beta-hydroxybutyryl)lysine is present on K54. Residue R56 is modified to Citrulline. K66 is modified (N6-(beta-hydroxybutyryl)lysine). S67 carries the phosphoserine modification. Residue K77 is modified to N6-acetyllysine. K87 carries the N6-(beta-hydroxybutyryl)lysine modification. Residue K92 is modified to N6-(beta-hydroxybutyryl)lysine; alternate. The residue at position 92 (K92) is an N6-acetyllysine; alternate. Residues 93-214 (GTLVQTKGTG…KPKKAAPKKK (122 aa)) form a disordered region. S106 is modified (phosphoserine). An N6-(beta-hydroxybutyryl)lysine modification is found at K108. The span at 116-144 (KASTTKVTVKAKASGAAKKPKKTAGAAAK) shows a compositional bias: low complexity. K121 is modified (N6-acetyllysine). Basic residues-rich tracts occupy residues 145–179 (KTVK…KKVA) and 186–214 (KAVK…PKKK). T202 carries the post-translational modification Phosphothreonine.

The protein belongs to the histone H1/H5 family. In terms of assembly, interacts with DFFB. Post-translationally, H1 histones are progressively phosphorylated during the cell cycle, becoming maximally phosphorylated during late G2 phase and M phase, and being dephosphorylated sharply thereafter. Citrullination at Arg-56 (H1R54ci) by PADI4 takes place within the DNA-binding site of H1 and results in its displacement from chromatin and global chromatin decondensation, thereby promoting pluripotency and stem cell maintenance.

It is found in the nucleus. The protein resides in the chromosome. Its function is as follows. H1 histones bind to linker DNA between nucleosomes forming the macromolecular structure known as the chromatin fiber. H1 histones are necessary for the condensation of nucleosome chains into higher-order structured fibers. Also acts as a regulator of individual gene transcription through chromatin remodeling. The protein is Histone H1.1 of Rattus norvegicus (Rat).